The sequence spans 103 residues: MHVKKGDKVKVLSGKDRGKEGTVLEAFPKNERVLVEGVNMVQKHAKPSQENPQGGILNIEAPIHVSNVLPVDPKSGEPTRVGYEVKDGKKIRIAKKSGEALDK.

It belongs to the universal ribosomal protein uL24 family. As to quaternary structure, part of the 50S ribosomal subunit.

Functionally, one of two assembly initiator proteins, it binds directly to the 5'-end of the 23S rRNA, where it nucleates assembly of the 50S subunit. Its function is as follows. One of the proteins that surrounds the polypeptide exit tunnel on the outside of the subunit. This chain is Large ribosomal subunit protein uL24, found in Oceanobacillus iheyensis (strain DSM 14371 / CIP 107618 / JCM 11309 / KCTC 3954 / HTE831).